We begin with the raw amino-acid sequence, 725 residues long: Kinesin-like protein KIF2C (725 aa).

An N-acetylalanine modification is found at A2. The segment at 2 to 254 is globular; it reads AMDSSLQARL…CHPLTMTDPI (253 aa). Phosphoserine is present on residues S6 and S22. The interval 89-116 is disordered; that stretch reads QKQKRRSVNSKIPAPKESLRSRSTRMST. Phosphoserine; by AURKB is present on S95. The short motif at 98–101 is the Microtubule tip localization signal element; the sequence is SKIP. A phosphoserine mark is found at S106, S109, S111, S115, S166, S175, S187, and S192. The segment at 207–238 is negative regulator of microtubule-binding; it reads EKKAQNSEMRMKRAQEYDSSFPNWEFARMIKE. The Kinesin motor domain maps to 258–588; sequence RICVCVRKRP…LRYADRVKEL (331 aa). ATP is bound by residues R264 and 348–355; that span reads GQTGSGKT. The short motif at 415–418 is the Nuclear localization signal element; the sequence is KKAK. S519, S621, and S633 each carry phosphoserine. The stretch at 618–658 forms a coiled coil; it reads GNLSKEEEELSSQMSSFNEAMTQIRELEEKAMEELKEIIQQ.

The protein belongs to the TRAFAC class myosin-kinesin ATPase superfamily. Kinesin family. MCAK/KIF2 subfamily. In terms of assembly, interacts with CENPH. Interacts with MTUS2/TIP150; the interaction is direct. Interacts with MAPRE1; the interaction is direct, regulated by phosphorylation and is probably required for targeting to growing microtubule plus ends. Interacts with KIF18B at microtubule tips; this interaction increases the affinity of both partners for microtubule plus ends and is required for robust microtubule depolymerization. Phosphorylation by AURKA or AURKB strongly reduces KIF18B-binding. In terms of processing, phosphorylation by AURKB, regulates association with centromeres and kinetochores and the microtubule depolymerization activity. Post-translationally, ubiquitinated. In terms of tissue distribution, expressed at high levels in thymus and testis, at low levels in small intestine, the mucosal lining of colon, and placenta, and at very low levels in spleen and ovary; expression is not detected in prostate, peripheral blood Leukocytes, heart, brain, lung, liver, skeletal muscle, kidney or pancreas. Isoform 2 is testis-specific.

Its subcellular location is the cytoplasm. It is found in the cytoskeleton. The protein localises to the nucleus. It localises to the chromosome. The protein resides in the centromere. Its subcellular location is the kinetochore. Functionally, in complex with KIF18B, constitutes the major microtubule plus-end depolymerizing activity in mitotic cells. Regulates the turnover of microtubules at the kinetochore and functions in chromosome segregation during mitosis. Plays a role in chromosome congression and is required for the lateral to end-on conversion of the chromosome-microtubule attachment. This is Kinesin-like protein KIF2C (KIF2C) from Homo sapiens (Human).